The sequence spans 289 residues: 18S rRNA (guanine-N(7))-methyltransferase RID2 (289 aa).

Positions 215–289 (KNEYDESCSE…FTSRKRRTRF (75 aa)) are disordered. The span at 219–237 (DESCSEDDNSDDEESEEVG) shows a compositional bias: acidic residues. Residues 243–254 (RPRKRQRTNTKV) are compositionally biased toward basic residues. A compositionally biased stretch (basic and acidic residues) spans 255–264 (KGREWVLRKK). The short motif at 268–275 (RRKGKNVP) is the Nuclear localization signal element.

This sequence belongs to the class I-like SAM-binding methyltransferase superfamily. BUD23/WBSCR22 family. Expressed in seedlings, roots and flowers.

The protein localises to the nucleus. It is found in the nucleoplasm. Its subcellular location is the cytoplasm. It localises to the perinuclear region. The protein resides in the nucleolus. The catalysed reaction is guanosine(1575) in yeast 18S rRNA + S-adenosyl-L-methionine = N(7)-methylguanosine(1575) in yeast 18S rRNA + S-adenosyl-L-homocysteine. Functionally, essential protein. S-adenosyl-L-methionine-dependent methyltransferase that specifically methylates the N(7) position of a guanine in 18S rRNA. Requires the methyltransferase adapter protein TRM112 for full rRNA methyltransferase activity. Important for biogenesis end export of the 40S ribosomal subunit independent on its methyltransferase activity. Involved in the pre-rRNA processing steps in the nucleolus leading to small-subunit rRNA production independently of its RNA-modifying catalytic activity. Supports cell proliferation. Required for the initiation of lateral root primordia formation and for the root apical meristem (RAM) organization as well as for leaves development. During callus formation from hypocotyl and root explants, required for the initial stage of reactivation of cell proliferation in the hypocotyl stele. Involved in leaf polarity establishment by functioning cooperatively with AS2 to repress abaxial genes ARF3, ARF4, KAN1, KAN2, YAB1 and YAB5, and the knox homeobox genes KNAT1, KNAT2, KNAT6, and STM to promote adaxial development in leaf primordia at shoot apical meristems at high temperatures. The chain is 18S rRNA (guanine-N(7))-methyltransferase RID2 from Arabidopsis thaliana (Mouse-ear cress).